A 213-amino-acid polypeptide reads, in one-letter code: Probable 26S proteasome regulatory subunit p27 (213 aa).

Positions 1–82 (MDEFKQLDLK…IKKVLEKVFS (82 aa)) form a coiled coil. The region spanning 120–184 (SKILGRVKPF…TLDVLLIRGY (65 aa)) is the PDZ domain.

It is found in the cytoplasm. The protein localises to the nucleus. Functionally, acts as a chaperone during the assembly of the 26S proteasome, specifically of the base subcomplex of the 19S regulatory complex (RC). This Schizosaccharomyces pombe (strain 972 / ATCC 24843) (Fission yeast) protein is Probable 26S proteasome regulatory subunit p27 (nas2).